The primary structure comprises 315 residues: DNA-directed RNA polymerase subunit alpha (315 aa).

The interval 1–227 (MTQFQIECVE…NLFNPFKKIN (227 aa)) is alpha N-terminal domain (alpha-NTD). Positions 239–315 (EDKISQIPIE…PKRKTNKKEN (77 aa)) are alpha C-terminal domain (alpha-CTD).

It belongs to the RNA polymerase alpha chain family. As to quaternary structure, in plastids the minimal PEP RNA polymerase catalytic core is composed of four subunits: alpha, beta, beta', and beta''. When a (nuclear-encoded) sigma factor is associated with the core the holoenzyme is formed, which can initiate transcription.

The protein localises to the plastid. The protein resides in the cyanelle. It carries out the reaction RNA(n) + a ribonucleoside 5'-triphosphate = RNA(n+1) + diphosphate. Functionally, DNA-dependent RNA polymerase catalyzes the transcription of DNA into RNA using the four ribonucleoside triphosphates as substrates. The protein is DNA-directed RNA polymerase subunit alpha of Cyanophora paradoxa.